Consider the following 359-residue polypeptide: 3-dehydroquinate synthase (359 aa).

NAD(+) is bound by residues 71–76 (DAEAAK), 105–109 (GAVTD), 129–130 (TT), lysine 142, and lysine 151. Positions 184, 247, and 263 each coordinate Zn(2+).

It belongs to the sugar phosphate cyclases superfamily. Dehydroquinate synthase family. Requires NAD(+) as cofactor. Co(2+) serves as cofactor. The cofactor is Zn(2+).

The protein resides in the cytoplasm. It catalyses the reaction 7-phospho-2-dehydro-3-deoxy-D-arabino-heptonate = 3-dehydroquinate + phosphate. Its pathway is metabolic intermediate biosynthesis; chorismate biosynthesis; chorismate from D-erythrose 4-phosphate and phosphoenolpyruvate: step 2/7. Its function is as follows. Catalyzes the conversion of 3-deoxy-D-arabino-heptulosonate 7-phosphate (DAHP) to dehydroquinate (DHQ). The chain is 3-dehydroquinate synthase from Leifsonia xyli subsp. xyli (strain CTCB07).